Here is a 244-residue protein sequence, read N- to C-terminus: Ribosome maturation factor RimM (244 aa).

Residues 1 to 58 (MSERDSGSSGPVKAKAAAPRAKTSGQAPFGAFVRKPVEKTEGKAKANAANAGSGATEM) form a disordered region. Positions 13-22 (KAKAAAPRAK) are enriched in low complexity. Positions 35 to 44 (KPVEKTEGKA) are enriched in basic and acidic residues. Positions 45-57 (KANAANAGSGATE) are enriched in low complexity. Residues 163 to 244 (ADEFYWVDLL…QITVDWEADY (82 aa)) form the PRC barrel domain.

The protein belongs to the RimM family. In terms of assembly, binds ribosomal protein uS19.

It is found in the cytoplasm. Functionally, an accessory protein needed during the final step in the assembly of 30S ribosomal subunit, possibly for assembly of the head region. Essential for efficient processing of 16S rRNA. May be needed both before and after RbfA during the maturation of 16S rRNA. It has affinity for free ribosomal 30S subunits but not for 70S ribosomes. The chain is Ribosome maturation factor RimM from Paraburkholderia xenovorans (strain LB400).